A 476-amino-acid polypeptide reads, in one-letter code: Bifunctional protein HldE (476 aa).

A ribokinase region spans residues 1-319 (MKITLPEYDK…ANAVYSQQEI (319 aa)). 196–199 (NLAE) is a binding site for ATP. Asp265 is a catalytic residue. Positions 345-476 (MTNGCFDILH…EIIKTIRNNS (132 aa)) are cytidylyltransferase.

It in the N-terminal section; belongs to the carbohydrate kinase PfkB family. In the C-terminal section; belongs to the cytidylyltransferase family. As to quaternary structure, homodimer.

The catalysed reaction is D-glycero-beta-D-manno-heptose 7-phosphate + ATP = D-glycero-beta-D-manno-heptose 1,7-bisphosphate + ADP + H(+). It carries out the reaction D-glycero-beta-D-manno-heptose 1-phosphate + ATP + H(+) = ADP-D-glycero-beta-D-manno-heptose + diphosphate. The protein operates within nucleotide-sugar biosynthesis; ADP-L-glycero-beta-D-manno-heptose biosynthesis; ADP-L-glycero-beta-D-manno-heptose from D-glycero-beta-D-manno-heptose 7-phosphate: step 1/4. It functions in the pathway nucleotide-sugar biosynthesis; ADP-L-glycero-beta-D-manno-heptose biosynthesis; ADP-L-glycero-beta-D-manno-heptose from D-glycero-beta-D-manno-heptose 7-phosphate: step 3/4. Functionally, catalyzes the phosphorylation of D-glycero-D-manno-heptose 7-phosphate at the C-1 position to selectively form D-glycero-beta-D-manno-heptose-1,7-bisphosphate. Catalyzes the ADP transfer from ATP to D-glycero-beta-D-manno-heptose 1-phosphate, yielding ADP-D-glycero-beta-D-manno-heptose. The protein is Bifunctional protein HldE of Psychromonas ingrahamii (strain DSM 17664 / CCUG 51855 / 37).